Here is a 237-residue protein sequence, read N- to C-terminus: Ribonuclease 3 (237 aa).

Positions 6–133 constitute an RNase III domain; the sequence is LIEVEKLIGI…VIAAVYLDKG (128 aa). Residue E46 participates in Mg(2+) binding. The active site involves D50. Residues D119 and E122 each coordinate Mg(2+). Residue E122 is part of the active site. Positions 160–229 constitute a DRBM domain; it reads DFKTRLQEVL…AKAALQRLGE (70 aa).

The protein belongs to the ribonuclease III family. As to quaternary structure, homodimer. It depends on Mg(2+) as a cofactor.

It is found in the cytoplasm. It catalyses the reaction Endonucleolytic cleavage to 5'-phosphomonoester.. Digests double-stranded RNA. Involved in the processing of primary rRNA transcript to yield the immediate precursors to the large and small rRNAs (23S and 16S). Processes some mRNAs, and tRNAs when they are encoded in the rRNA operon. Processes pre-crRNA and tracrRNA of type II CRISPR loci if present in the organism. The polypeptide is Ribonuclease 3 (Clostridium perfringens (strain 13 / Type A)).